We begin with the raw amino-acid sequence, 455 residues long: Growth/differentiation factor 6 (455 aa).

Residues 1–22 form the signal peptide; it reads MDTPRVLLSAVFLISFLWDLPG. Positions 23–335 are excised as a propeptide; sequence FQQASISSSS…LPSPGRRRRR (313 aa). The segment at 29 to 93 is disordered; the sequence is SSSSSSAELG…EPPGRGPRVV (65 aa). Basic and acidic residues predominate over residues 45-76; that stretch reads SRKEGKMQRAPRDSDAGREGQEPQPRPQDEPR. A compositionally biased stretch (low complexity) spans 77 to 91; the sequence is AQQPRAQEPPGRGPR. Asn-114 carries an N-linked (GlcNAc...) asparagine glycan. 2 disordered regions span residues 244–267 and 300–351; these read EAEA…GFGR and AEAA…KKSR. The segment covering 330-351 has biased composition (basic residues); the sequence is GRRRRRTAFASRHGKRHGKKSR. 3 cysteine pairs are disulfide-bonded: Cys-354/Cys-420, Cys-383/Cys-452, and Cys-387/Cys-454.

It belongs to the TGF-beta family. As to quaternary structure, homodimer; disulfide-linked.

The protein resides in the secreted. Its function is as follows. Growth factor that controls proliferation and cellular differentiation in the retina and bone formation. Plays a key role in regulating apoptosis during retinal development. Establishes dorsal-ventral positional information in the retina and controls the formation of the retinotectal map. Required for normal formation of bones and joints in the limbs, skull, digits and axial skeleton. Plays a key role in establishing boundaries between skeletal elements during development. Regulation of GDF6 expression seems to be a mechanism for evolving species-specific changes in skeletal structures. Seems to positively regulate differentiation of chondrogenic tissue through the growth factor receptors subunits BMPR1A, BMPR1B, BMPR2 and ACVR2A, leading to the activation of SMAD1-SMAD5-SMAD8 complex. The regulation of chondrogenic differentiation is inhibited by NOG. Also involved in the induction of adipogenesis from mesenchymal stem cells. This mechanism acts through the growth factor receptors subunits BMPR1A, BMPR2 and ACVR2A and the activation of SMAD1-SMAD5-SMAD8 complex and MAPK14/p38. This chain is Growth/differentiation factor 6 (GDF6), found in Homo sapiens (Human).